The primary structure comprises 404 residues: L-cysteine:1D-myo-inositol 2-amino-2-deoxy-alpha-D-glucopyranoside ligase (404 aa).

A Zn(2+)-binding site is contributed by cysteine 35. L-cysteinyl-5'-AMP-binding positions include 35-38 (CGIT), threonine 50, and 73-75 (NVT). Residues 37–47 (ITPYDATHLGH) carry the 'HIGH' region motif. The short motif at 178 to 183 (ERGGDP) is the 'ERGGDP' region element. Tryptophan 219 contacts L-cysteinyl-5'-AMP. Zn(2+) is bound at residue cysteine 223. 241–243 (GND) lines the L-cysteinyl-5'-AMP pocket. Residue histidine 248 participates in Zn(2+) binding. Isoleucine 275 contacts L-cysteinyl-5'-AMP. The 'KMSKS' region signature appears at 281-285 (KMSKS).

The protein belongs to the class-I aminoacyl-tRNA synthetase family. MshC subfamily. As to quaternary structure, monomer. Requires Zn(2+) as cofactor.

The catalysed reaction is 1D-myo-inositol 2-amino-2-deoxy-alpha-D-glucopyranoside + L-cysteine + ATP = 1D-myo-inositol 2-(L-cysteinylamino)-2-deoxy-alpha-D-glucopyranoside + AMP + diphosphate + H(+). Catalyzes the ATP-dependent condensation of GlcN-Ins and L-cysteine to form L-Cys-GlcN-Ins. The polypeptide is L-cysteine:1D-myo-inositol 2-amino-2-deoxy-alpha-D-glucopyranoside ligase (Salinispora tropica (strain ATCC BAA-916 / DSM 44818 / JCM 13857 / NBRC 105044 / CNB-440)).